Consider the following 291-residue polypeptide: Phytanoyl-CoA dioxygenase domain-containing protein 1 (291 aa).

Residues Lys102, Met141, 156 to 158 (HQD), and Trp174 each bind 2-oxoglutarate. The Fe cation site is built by His156 and Asp158. His246 is a binding site for Fe cation. 2-oxoglutarate-binding residues include Ser248 and Arg257.

It belongs to the PhyH family. PHYHD1 subfamily. Fe cation is required as a cofactor.

In terms of biological role, 2-oxoglutarate(2OG)-dependent dioxygenase that catalyzes the conversion of 2-oxoglutarate to succinate and CO(2) in an iron-dependent manner. However, does not couple 2OG turnover to the hydroxylation of acyl-coenzyme A derivatives, implying that it is not directly involved in phytanoyl coenzyme-A metabolism. Does not show detectable activity towards fatty acid CoA thioesters. The chain is Phytanoyl-CoA dioxygenase domain-containing protein 1 (phyhd1) from Danio rerio (Zebrafish).